The following is a 76-amino-acid chain: Small ribosomal subunit protein bS18 (76 aa).

This sequence belongs to the bacterial ribosomal protein bS18 family. In terms of assembly, part of the 30S ribosomal subunit. Forms a tight heterodimer with protein bS6.

Functionally, binds as a heterodimer with protein bS6 to the central domain of the 16S rRNA, where it helps stabilize the platform of the 30S subunit. This Xanthomonas campestris pv. campestris (strain 8004) protein is Small ribosomal subunit protein bS18.